The primary structure comprises 340 residues: uncharacterized protein (340 aa).

Over residues 193 to 207 the composition is skewed to basic and acidic residues; the sequence is KELPKEKKKSDGDKT. Positions 193–340 are disordered; that stretch reads KELPKEKKKS…FIPLQPKKKI (148 aa). Residues 217–228 are compositionally biased toward low complexity; the sequence is FFGFWGHSGSKS. Basic and acidic residues predominate over residues 235–244; sequence EKPIEAKNEI. Composition is skewed to polar residues over residues 263 to 279 and 307 to 328; these read SDKN…SDQQ and PAQS…SLTL.

This is an uncharacterized protein from Saccharomyces cerevisiae (strain ATCC 204508 / S288c) (Baker's yeast).